The following is a 449-amino-acid chain: Nuclear hormone receptor family member nhr-43 (449 aa).

The segment at residues 44 to 122 (NIHCRVCERR…VGLNVDAVVG (79 aa)) is a DNA-binding region (nuclear receptor). 2 NR C4-type zinc fingers span residues 47–68 (CRVC…CRAC) and 84–105 (CRRG…CQKC). Basic and acidic residues predominate over residues 125–142 (SPDHVKTTSRDESVKKED). The tract at residues 125 to 154 (SPDHVKTTSRDESVKKEDEESDTGSEGKSC) is disordered. Positions 200 to 449 (NYNEFTKSRL…SDLNAYLYSI (250 aa)) constitute an NR LBD domain.

The protein localises to the nucleus. Its function is as follows. Ligand-activated transcription factor. Positively modulates expression of homeobox protein lin-39, perhaps by binding to the sequence motif 5'-TGAC-3' in regulatory regions of the lin-39 gene, acting in the embryo, and also in the vulval lineage. The protein is Nuclear hormone receptor family member nhr-43 of Caenorhabditis elegans.